A 397-amino-acid chain; its full sequence is Citrate synthase (397 aa).

Active-site residues include His266 and Asp320.

The protein belongs to the citrate synthase family.

The enzyme catalyses oxaloacetate + acetyl-CoA + H2O = citrate + CoA + H(+). It participates in carbohydrate metabolism; tricarboxylic acid cycle; isocitrate from oxaloacetate: step 1/2. The sequence is that of Citrate synthase (gltA) from Synechocystis sp. (strain ATCC 27184 / PCC 6803 / Kazusa).